A 272-amino-acid chain; its full sequence is TLC domain-containing protein 4 C (272 aa).

The next 7 helical transmembrane spans lie at 16 to 36 (FSNS…FIIY), 71 to 91 (VSMI…VESF), 103 to 123 (SLLM…IICY), 128 to 148 (LVGT…IYVA), 155 to 175 (CFVP…PLNM), 196 to 216 (FVIT…IYLV), and 233 to 253 (VFIT…FLLI). The TLC domain maps to 61 to 261 (KKKLEWDQRV…LIKKLYQTYL (201 aa)).

The protein belongs to the TLCD4 family.

The protein resides in the membrane. The protein is TLC domain-containing protein 4 C (tlcd4c) of Dictyostelium discoideum (Social amoeba).